We begin with the raw amino-acid sequence, 353 residues long: DNA polymerase IV (353 aa).

A UmuC domain is found at 6 to 187 (IIHIDCDCFY…LPVTKLHGVG (182 aa)). Asp10 and Asp105 together coordinate Mg(2+). The active site involves Glu106.

The protein belongs to the DNA polymerase type-Y family. As to quaternary structure, monomer. Requires Mg(2+) as cofactor.

It is found in the cytoplasm. It catalyses the reaction DNA(n) + a 2'-deoxyribonucleoside 5'-triphosphate = DNA(n+1) + diphosphate. Poorly processive, error-prone DNA polymerase involved in untargeted mutagenesis. Copies undamaged DNA at stalled replication forks, which arise in vivo from mismatched or misaligned primer ends. These misaligned primers can be extended by PolIV. Exhibits no 3'-5' exonuclease (proofreading) activity. May be involved in translesional synthesis, in conjunction with the beta clamp from PolIII. The sequence is that of DNA polymerase IV from Pseudomonas syringae pv. tomato (strain ATCC BAA-871 / DC3000).